A 203-amino-acid chain; its full sequence is Dephospho-CoA kinase (203 aa).

A DPCK domain is found at 6-203 (RLGITGGIAC…SLLGRGGKGG (198 aa)). 14-19 (ACGKSV) serves as a coordination point for ATP.

This sequence belongs to the CoaE family.

The protein resides in the cytoplasm. The enzyme catalyses 3'-dephospho-CoA + ATP = ADP + CoA + H(+). The protein operates within cofactor biosynthesis; coenzyme A biosynthesis; CoA from (R)-pantothenate: step 5/5. Functionally, catalyzes the phosphorylation of the 3'-hydroxyl group of dephosphocoenzyme A to form coenzyme A. The chain is Dephospho-CoA kinase from Thermosynechococcus vestitus (strain NIES-2133 / IAM M-273 / BP-1).